Here is a 412-residue protein sequence, read N- to C-terminus: DNA utilization protein HofQ (412 aa).

The first 18 residues, 1–18, serve as a signal peptide directing secretion; it reads MKQWIAALLLMLIPGVQA.

This sequence belongs to the bacterial secretin family. PilQ subfamily.

The protein resides in the cell outer membrane. Its function is as follows. Required for the use of extracellular DNA as a nutrient. Could be the porin responsible for transport of DNA across the outer membrane. This chain is DNA utilization protein HofQ (hofQ), found in Escherichia coli (strain K12).